The primary structure comprises 70 residues: MQHIEADIEQLQMKVAFQEDTIEELNKALIKQQKQLELLEFQLSHVINKVKEIDVPSGDSQEVEPPPPHY.

It belongs to the SlyX family.

This is Protein SlyX homolog from Pseudoalteromonas atlantica (strain T6c / ATCC BAA-1087).